Reading from the N-terminus, the 330-residue chain is GTPase Obg (330 aa).

Residues 1–159 (MNFIDEVKIY…MWIHLSLKLL (159 aa)) enclose the Obg domain. The OBG-type G domain maps to 160–327 (SDVGLVGLPN…IVKLALKIIK (168 aa)). Residues 166 to 173 (GLPNAGKS), 191 to 195 (FTTLV), 212 to 215 (DIPG), 279 to 282 (NKCD), and 308 to 310 (STY) each bind GTP. Positions 173 and 193 each coordinate Mg(2+).

It belongs to the TRAFAC class OBG-HflX-like GTPase superfamily. OBG GTPase family. As to quaternary structure, monomer. The cofactor is Mg(2+).

The protein resides in the cytoplasm. In terms of biological role, an essential GTPase which binds GTP, GDP and possibly (p)ppGpp with moderate affinity, with high nucleotide exchange rates and a fairly low GTP hydrolysis rate. Plays a role in control of the cell cycle, stress response, ribosome biogenesis and in those bacteria that undergo differentiation, in morphogenesis control. In Rickettsia akari (strain Hartford), this protein is GTPase Obg.